Reading from the N-terminus, the 242-residue chain is DNA repair protein RecO (242 aa).

The protein belongs to the RecO family.

Functionally, involved in DNA repair and RecF pathway recombination. This chain is DNA repair protein RecO, found in Vibrio atlanticus (strain LGP32) (Vibrio splendidus (strain Mel32)).